Consider the following 336-residue polypeptide: Holliday junction branch migration complex subunit RuvB (336 aa).

Residues 4-184 (ADRLISAGTT…FGIVQRLEFY (181 aa)) form a large ATPase domain (RuvB-L) region. ATP is bound by residues Ile-23, Arg-24, Gly-65, Lys-68, Thr-69, Thr-70, 131–133 (EDY), Arg-174, Tyr-184, and Arg-221. Thr-69 provides a ligand contact to Mg(2+). Residues 185–255 (QVPDLQYIVS…IAAQALDMLN (71 aa)) are small ATPAse domain (RuvB-S). Residues 258–336 (AEGFDYMDRK…HFGITPPEMP (79 aa)) form a head domain (RuvB-H) region. DNA contacts are provided by Arg-294, Arg-313, and Arg-318.

Belongs to the RuvB family. In terms of assembly, homohexamer. Forms an RuvA(8)-RuvB(12)-Holliday junction (HJ) complex. HJ DNA is sandwiched between 2 RuvA tetramers; dsDNA enters through RuvA and exits via RuvB. An RuvB hexamer assembles on each DNA strand where it exits the tetramer. Each RuvB hexamer is contacted by two RuvA subunits (via domain III) on 2 adjacent RuvB subunits; this complex drives branch migration. In the full resolvosome a probable DNA-RuvA(4)-RuvB(12)-RuvC(2) complex forms which resolves the HJ.

It is found in the cytoplasm. It carries out the reaction ATP + H2O = ADP + phosphate + H(+). In terms of biological role, the RuvA-RuvB-RuvC complex processes Holliday junction (HJ) DNA during genetic recombination and DNA repair, while the RuvA-RuvB complex plays an important role in the rescue of blocked DNA replication forks via replication fork reversal (RFR). RuvA specifically binds to HJ cruciform DNA, conferring on it an open structure. The RuvB hexamer acts as an ATP-dependent pump, pulling dsDNA into and through the RuvAB complex. RuvB forms 2 homohexamers on either side of HJ DNA bound by 1 or 2 RuvA tetramers; 4 subunits per hexamer contact DNA at a time. Coordinated motions by a converter formed by DNA-disengaged RuvB subunits stimulates ATP hydrolysis and nucleotide exchange. Immobilization of the converter enables RuvB to convert the ATP-contained energy into a lever motion, pulling 2 nucleotides of DNA out of the RuvA tetramer per ATP hydrolyzed, thus driving DNA branch migration. The RuvB motors rotate together with the DNA substrate, which together with the progressing nucleotide cycle form the mechanistic basis for DNA recombination by continuous HJ branch migration. Branch migration allows RuvC to scan DNA until it finds its consensus sequence, where it cleaves and resolves cruciform DNA. The sequence is that of Holliday junction branch migration complex subunit RuvB from Shigella flexneri serotype 5b (strain 8401).